A 155-amino-acid chain; its full sequence is Chaperone protein IpgC (155 aa).

This sequence belongs to the LcrH/SycD chaperone family.

The protein resides in the cytoplasm. Assists the correct folding of nascent IpaB. Once it is bound to IpaB, it binds to IpaC and impedes their premature association that would lead to their degradation in the absence of IpcG. The chain is Chaperone protein IpgC (ipgC) from Shigella dysenteriae.